A 390-amino-acid chain; its full sequence is Chorismate synthase (390 aa).

Position 48 (arginine 48) interacts with NADP(+). Residues 126–128 (RAS), glycine 286, 301–305 (KPTSS), and arginine 328 each bind FMN.

Belongs to the chorismate synthase family. It depends on FMNH2 as a cofactor.

The catalysed reaction is 5-O-(1-carboxyvinyl)-3-phosphoshikimate = chorismate + phosphate. Its pathway is metabolic intermediate biosynthesis; chorismate biosynthesis; chorismate from D-erythrose 4-phosphate and phosphoenolpyruvate: step 7/7. In terms of biological role, catalyzes the anti-1,4-elimination of the C-3 phosphate and the C-6 proR hydrogen from 5-enolpyruvylshikimate-3-phosphate (EPSP) to yield chorismate, which is the branch point compound that serves as the starting substrate for the three terminal pathways of aromatic amino acid biosynthesis. This reaction introduces a second double bond into the aromatic ring system. The sequence is that of Chorismate synthase from Sulfurisphaera tokodaii (strain DSM 16993 / JCM 10545 / NBRC 100140 / 7) (Sulfolobus tokodaii).